Here is a 1937-residue protein sequence, read N- to C-terminus: Collagen-like protein 7 (1937 aa).

N-linked (GlcNAc...) asparagine; by host glycosylation is found at N6 and N21. Disordered regions lie at residues 88–248 (CKGN…KGDK), 294–531 (NLKG…PDLG), 583–643 (LKGD…NQGV), and 670–1144 (IKGD…DTAT). Collagen-like domains are found at residues 102–161 (GPKG…KGEK), 168–227 (GEKG…KGDI), 297–356 (GEKG…KGEK), 363–422 (GDKG…IGEK), and 453–512 (GDKG…KGDK). Over residues 296 to 514 (KGEKGDKGNK…DKGDKGDKGD (219 aa)) the composition is skewed to basic and acidic residues. Residue N515 is glycosylated (N-linked (GlcNAc...) asparagine; by host). 3 stretches are compositionally biased toward basic and acidic residues: residues 584–605 (KGDK…KGDK), 614–625 (KGEKGDKGDKGD), and 670–899 (IKGD…KGDK). Collagen-like domains lie at 672–731 (GDKG…KGDK), 735–854 (GNKG…KGNI), 867–926 (GLKG…KGDK), 936–995 (GIKG…KGDK), and 1023–1142 (GSKG…KGDT). N902 carries an N-linked (GlcNAc...) asparagine; by host glycan. Residues 907-1141 (YKGDKGDKGS…DKGDKGDKGD (235 aa)) are compositionally biased toward basic and acidic residues. N-linked (GlcNAc...) asparagine; by host glycans are attached at residues N1178, N1192, N1212, N1217, N1245, N1246, N1255, N1317, N1422, N1427, N1432, N1443, N1452, N1477, N1494, N1506, N1513, N1533, N1598, N1619, N1620, N1632, N1641, N1663, N1664, N1672, N1682, N1683, N1732, N1735, N1746, N1756, N1784, N1842, and N1934.

In terms of processing, may be hydroxylated on lysine by the viral-encoded procollagen-lysine,2-oxoglutarate 5-dioxygenase.

The protein localises to the virion. Its function is as follows. May participate in the formation of a layer of cross-linked glycosylated fibrils at the viral surface thus giving it a hairy-like appearance. This Acanthamoeba polyphaga mimivirus (APMV) protein is Collagen-like protein 7.